Reading from the N-terminus, the 118-residue chain is MSNMKTLSQRRAMRNRAKLAKASVVRPRLSVFRSSKHIYAQVIDDTRGVTVAAASSLDEKFGKKAGTDVAAAGEVGKLLAQRAKDAGITDVVFDRGGYIYHGRVKALAEGAREGGLNF.

This sequence belongs to the universal ribosomal protein uL18 family. In terms of assembly, part of the 50S ribosomal subunit; part of the 5S rRNA/L5/L18/L25 subcomplex. Contacts the 5S and 23S rRNAs.

In terms of biological role, this is one of the proteins that bind and probably mediate the attachment of the 5S RNA into the large ribosomal subunit, where it forms part of the central protuberance. The protein is Large ribosomal subunit protein uL18 of Parvibaculum lavamentivorans (strain DS-1 / DSM 13023 / NCIMB 13966).